A 476-amino-acid polypeptide reads, in one-letter code: MSYNTGKESSPVSPLKKRRASWSELWVNHHHLLSSSPLDLAAKFQSLTPPISKSKTLLPDFTLLLPDLILIRVIQKIPNSQRKNLSLVCKRWFRLHGRLVRSFKVSDWEFLSSGRLISRFPNLETVDLVSGCLISPPNLGILVNHRIVSFTVGVGSYQSWSFFEENLLSVELVERGLKALAGGCSNLRKLVVTNTSELGLLNVAEECSRLQELELHKCSDSVLLGIGAFENLQILRLVGNVDGLYNSLVSDIGLMILAQGCKRLVKLELVGCEGGFDGIKEIGECCQMLEELTVCDNKMESGWLGGLRYCENLKTLKLVSCKKIDNDPDESLSCCCPALERLQLEKCQLRDKNTVKALFKMCEAAREIVFQDCWGLDNDIFSLAMAFGRVKLLYLEGCSLLTTSGLESVILHWHELEHLKVVSCKNIKDSEVSPSLSALFSALVELQWRPDTRSHLSSSLTGTGIGEKGGKFFKKT.

In terms of domain architecture, F-box spans 59 to 111; it reads PDFTLLLPDLILIRVIQKIPNSQRKNLSLVCKRWFRLHGRLVRSFKVSDWEFL.

The chain is F-box protein At5g07670 from Arabidopsis thaliana (Mouse-ear cress).